Here is a 526-residue protein sequence, read N- to C-terminus: MSTTVRPDEVSSILRKQLAGFESEAEVYDVGTVLQVGDGIARVYGLSKAAAGELLEFPNKVMGMALNLEEDNVGAVLFGDSTEVKEGDTVKRTGILASVPVGEAMLGRVVNPLGVPIDGKGIIDTDIRLPLERRAPGVIYRKSVHEPLQTGLKAIDSMIPIGRGQRELIIGDRQTGKTAVALDTIINQKGKGVYCIYVAIGLKGSTVAQVVNTLEKHGAMEYTTVITATASDPAPLQFIAPFAGAALGEYFRDTGRHALVVYDDLSKQAVAYRQLSLLLRRPPGREAYPGDVFFLHSRLLERAAKITDDIEVAKKMNDLPDALRPMVQGGGSLTALPVIETQAGDVSAYIPTNVISITDGQIFLESNLFNSGQRPAINVGISVSRVGGAAQIKAMKKVAGTLRLDLAQFRELEAFSKFGSDLDKTTKAQLDRGARLVEILKQGQYVPMPVERQVAIIFLGTQGLLDLVAVQHVKKFEEEFLAMLDLKHSDILKSIAETGALEADVAGRLKEAAQKFVTTFNDKVKA.

171-178 (GDRQTGKT) lines the ATP pocket.

This sequence belongs to the ATPase alpha/beta chains family. In terms of assembly, F-type ATPases have 2 components, CF(1) - the catalytic core - and CF(0) - the membrane proton channel. CF(1) has five subunits: alpha(3), beta(3), gamma(1), delta(1), epsilon(1). CF(0) has four main subunits: a(1), b(1), b'(1) and c(9-12).

It localises to the cell inner membrane. The catalysed reaction is ATP + H2O + 4 H(+)(in) = ADP + phosphate + 5 H(+)(out). In terms of biological role, produces ATP from ADP in the presence of a proton gradient across the membrane. The alpha chain is a regulatory subunit. The chain is ATP synthase subunit alpha 2 from Chlorobium luteolum (strain DSM 273 / BCRC 81028 / 2530) (Pelodictyon luteolum).